The sequence spans 415 residues: Fructose-like permease IIC component (415 aa).

Topologically, residues 1 to 46 (MAIKKRSATVVHGASGAAAAVKNPQASKSSFWGELPQHVMSGISRM) are cytoplasmic. A PTS EIIC type-2 domain is found at 35–415 (LPQHVMSGIS…RKGKLLIESL (381 aa)). Residues 47–67 (VPTLIMGGVILAFSQLIAYSW) traverse the membrane as a helical segment. Topologically, residues 68-101 (LKIPADIGIMDALNSGKFSGFDLSLLKFAWLSQS) are periplasmic. Residues 102-122 (FGGVLFGFAIPMFAAFVANSI) traverse the membrane as a helical segment. Residues 123–126 (GGKL) lie on the Cytoplasmic side of the membrane. Residues 127-147 (AFPAGFIGGLMSTQPTQLLNF) traverse the membrane as a helical segment. Over 148 to 157 (DPSTMQWATS) the chain is Periplasmic. A helical transmembrane segment spans residues 158–178 (SPVPSTFIGALIISIVAGYLV). Residues 179-197 (KWMNQKIQLPDFLLAFKTT) are Cytoplasmic-facing. A helical transmembrane segment spans residues 198-218 (FLLPILSAIFVMLAMYYVITP). Topologically, residues 219–237 (FGGWINGGIRTVLTAAGEK) are periplasmic. The helical transmembrane segment at 238–258 (GALMYAMGIAAATAIDLGGPI) threads the bilayer. Topologically, residues 259–276 (NKAAGFVAFSFTTDHVLP) are cytoplasmic. Residues 277-297 (VTARSIAIVIPPIGLGLATII) traverse the membrane as a helical segment. The Periplasmic portion of the chain corresponds to 298–318 (DRRLTGKRLFNAQLYPQGKTA). Residues 319-339 (MFLAFMGISEGAIPFALESPI) form a helical membrane-spanning segment. Over 340-341 (TA) the chain is Cytoplasmic. A helical transmembrane segment spans residues 342–362 (IPSYMVGAIVGSTAAVWLGAV). The Periplasmic segment spans residues 363–378 (QWFPESAIWAWPLVTN). Residues 379–399 (LGVYMAGIALGAIITALMVVF) traverse the membrane as a helical segment. Topologically, residues 400–415 (LRLMMFRKGKLLIESL) are cytoplasmic.

The protein localises to the cell inner membrane. Functionally, the phosphoenolpyruvate-dependent sugar phosphotransferase system (PTS), a major carbohydrate active -transport system, catalyzes the phosphorylation of incoming sugar substrates concomitant with their translocation across the cell membrane. The protein is Fructose-like permease IIC component (fryC) of Escherichia coli O6:H1 (strain CFT073 / ATCC 700928 / UPEC).